Reading from the N-terminus, the 81-residue chain is Photosystem I iron-sulfur center (81 aa).

2 consecutive 4Fe-4S ferredoxin-type domains span residues 2 to 31 (SHAVKIYDTCIGCTQCVRACPLDVLEMVPW) and 37 to 68 (GQIASSPRTEDCVGCKRCETACPTDFLSIRVY). 8 residues coordinate [4Fe-4S] cluster: cysteine 11, cysteine 14, cysteine 17, cysteine 21, cysteine 48, cysteine 51, cysteine 54, and cysteine 58.

In terms of assembly, the cyanobacterial PSI reaction center is composed of one copy each of PsaA,B,C,D,E,F,I,J,K,L,M and X, and forms trimeric complexes. The cofactor is [4Fe-4S] cluster.

Its subcellular location is the cellular thylakoid membrane. The enzyme catalyses reduced [plastocyanin] + hnu + oxidized [2Fe-2S]-[ferredoxin] = oxidized [plastocyanin] + reduced [2Fe-2S]-[ferredoxin]. Functionally, apoprotein for the two 4Fe-4S centers FA and FB of photosystem I (PSI); essential for photochemical activity. FB is the terminal electron acceptor of PSI, donating electrons to ferredoxin. The C-terminus interacts with PsaA/B/D and helps assemble the protein into the PSI complex. Required for binding of PsaD and PsaE to PSI. PSI is a plastocyanin/cytochrome c6-ferredoxin oxidoreductase, converting photonic excitation into a charge separation, which transfers an electron from the donor P700 chlorophyll pair to the spectroscopically characterized acceptors A0, A1, FX, FA and FB in turn. The chain is Photosystem I iron-sulfur center from Synechococcus sp. (strain WH7803).